Reading from the N-terminus, the 32-residue chain is Photosystem II reaction center protein Z (32 aa).

Residues 9–29 form a helical membrane-spanning segment; sequence IIFSGSLIWVFLLIIVGFLNY.

The protein belongs to the PsbZ family. PSII is composed of 1 copy each of membrane proteins PsbA, PsbB, PsbC, PsbD, PsbE, PsbF, PsbH, PsbI, PsbJ, PsbK, PsbL, PsbM, PsbT, PsbY, PsbZ, Psb30/Ycf12, at least 3 peripheral proteins of the oxygen-evolving complex and a large number of cofactors. It forms dimeric complexes.

It is found in the plastid. It localises to the chloroplast thylakoid membrane. Its function is as follows. May control the interaction of photosystem II (PSII) cores with the light-harvesting antenna, regulates electron flow through the 2 photosystem reaction centers. PSII is a light-driven water plastoquinone oxidoreductase, using light energy to abstract electrons from H(2)O, generating a proton gradient subsequently used for ATP formation. This Euglena myxocylindracea protein is Photosystem II reaction center protein Z.